The following is a 391-amino-acid chain: Histamine H4 receptor (391 aa).

Residues 1 to 19 (MSESNGTDVLPLTAQVPLA) lie on the Extracellular side of the membrane. Residue asparagine 5 is glycosylated (N-linked (GlcNAc...) asparagine). Residues 20–40 (FLMSLLAFAITIGNAVVILAF) form a helical membrane-spanning segment. The Cytoplasmic segment spans residues 41 to 52 (VADRNLRHRSNY). A helical transmembrane segment spans residues 53–73 (FFLNLAISDFFVGVISIPLYI). Residues 74 to 87 (PHTLFNWNFGSGIC) are Extracellular-facing. Cysteines 87 and 166 form a disulfide. Residues 88 to 108 (MFWLITDYLLCTASVYSIVLI) traverse the membrane as a helical segment. Topologically, residues 109 to 131 (SYDRYQSVSNAVRYRAQHTGILK) are cytoplasmic. A helical transmembrane segment spans residues 132–152 (IVAQMVAVWILAFLVNGPMIL). Residues 153–174 (ASDSWKNSTNTEECEPGFVTEW) lie on the Extracellular side of the membrane. N-linked (GlcNAc...) asparagine glycosylation occurs at asparagine 159. The chain crosses the membrane as a helical span at residues 175 to 195 (YILAITAFLEFLLPVSLVVYF). At 196 to 306 (SVQIYWSLWK…LLRGRKLARS (111 aa)) the chain is on the cytoplasmic side. Residues 307–327 (LAVLLSAFAICWAPYCLFTIV) form a helical membrane-spanning segment. Residues 328-343 (LSTYRRGERPKSIWYS) lie on the Extracellular side of the membrane. The chain crosses the membrane as a helical span at residues 344–364 (IAFWLQWFNSLINPFLYPLCH). The Cytoplasmic portion of the chain corresponds to 365–391 (RRFQKAFWKILCVTKQPAPSQTQSVSS).

The protein belongs to the G-protein coupled receptor 1 family. In terms of assembly, interacts with TSPAN4.

The protein localises to the cell membrane. Functionally, the H4 subclass of histamine receptors could mediate the histamine signals in peripheral tissues. Displays a significant level of constitutive activity (spontaneous activity in the absence of agonist). In Rattus norvegicus (Rat), this protein is Histamine H4 receptor (Hrh4).